Here is a 274-residue protein sequence, read N- to C-terminus: 3-methyl-2-oxobutanoate hydroxymethyltransferase (274 aa).

Mg(2+)-binding residues include D49 and D88. 3-methyl-2-oxobutanoate-binding positions include D49–S50, D88, and K118. E120 is a Mg(2+) binding site. The active-site Proton acceptor is the E187.

Belongs to the PanB family. As to quaternary structure, homodecamer; pentamer of dimers. Requires Mg(2+) as cofactor.

Its subcellular location is the cytoplasm. The enzyme catalyses 3-methyl-2-oxobutanoate + (6R)-5,10-methylene-5,6,7,8-tetrahydrofolate + H2O = 2-dehydropantoate + (6S)-5,6,7,8-tetrahydrofolate. Its pathway is cofactor biosynthesis; (R)-pantothenate biosynthesis; (R)-pantoate from 3-methyl-2-oxobutanoate: step 1/2. Catalyzes the reversible reaction in which hydroxymethyl group from 5,10-methylenetetrahydrofolate is transferred onto alpha-ketoisovalerate to form ketopantoate. The protein is 3-methyl-2-oxobutanoate hydroxymethyltransferase of Rhodopseudomonas palustris (strain BisB5).